A 185-amino-acid polypeptide reads, in one-letter code: MLSAEEAPYQSCYCEENVYKLLEKLKPNLDDFFAVLISNDIKMIPLWKQKAERDPDVLWDYHVITISKNSDGSAKVYDFDSWIDWGVDFQTYWNQTMNEDEMKQFREKYRRKFRIIPARIYLSLLSSDRSHMLNPDGTYMKPPPEWPLIQNSTNSNLMNLIDMKLEFPETMVMDETEIRRFFSDA.

Active-site residues include cysteine 14, histidine 62, and aspartate 78.

The protein belongs to the NTAQ1 family. Monomer.

It catalyses the reaction N-terminal L-glutaminyl-[protein] + H2O = N-terminal L-glutamyl-[protein] + NH4(+). Its function is as follows. Mediates the side-chain deamidation of N-terminal glutamine residues to glutamate, an important step in N-end rule pathway of protein degradation. Conversion of the resulting N-terminal glutamine to glutamate renders the protein susceptible to arginylation, polyubiquitination and degradation as specified by the N-end rule. Does not act on substrates with internal or C-terminal glutamine and does not act on non-glutamine residues in any position. This Caenorhabditis briggsae protein is Protein N-terminal glutamine amidohydrolase.